The following is a 176-amino-acid chain: MSTPARDPNTAGTAALSPFSTPNHELRAPGPGEAHSPFTPTAAPGSQPAGSLSDPEDGPDPTFNFYIQGHRRRPYDRQNRFGKLESEIRETKSQLETLRQELKHLQADVDDLKETVYAAGTSTASTSVPPSQPNSPTPTATTPEASPAAPTTESTETTGPSVATNATEPSESRPAR.

Disordered stretches follow at residues 1–85 (MSTP…GKLE) and 116–176 (VYAA…RPAR). The span at 75 to 85 (YDRQNRFGKLE) shows a compositional bias: basic and acidic residues. The stretch at 76 to 119 (DRQNRFGKLESEIRETKSQLETLRQELKHLQADVDDLKETVYAA) forms a coiled coil. The span at 137-161 (TPTATTPEASPAAPTTESTETTGPS) shows a compositional bias: low complexity.

As to quaternary structure, interacts with VP1.

It is found in the virion. Its subcellular location is the host nucleus. The protein is Avian agnoprotein 1a of Budgerigar fledgling disease virus (BFPyV).